We begin with the raw amino-acid sequence, 259 residues long: Phosphatidate cytidylyltransferase (259 aa).

Transmembrane regions (helical) follow at residues 31–51, 69–89, 103–123, 129–149, 170–190, 193–213, and 236–256; these read LVIF…CFAI, PLVL…IGLL, FFKS…LIKI, YYLL…YYIG, FLGG…YGIL, FLLG…KSFI, and FDAL…GELN.

Belongs to the CDS family.

It is found in the cell membrane. It catalyses the reaction a 1,2-diacyl-sn-glycero-3-phosphate + CTP + H(+) = a CDP-1,2-diacyl-sn-glycerol + diphosphate. It functions in the pathway phospholipid metabolism; CDP-diacylglycerol biosynthesis; CDP-diacylglycerol from sn-glycerol 3-phosphate: step 3/3. This is Phosphatidate cytidylyltransferase (cdsA) from Aquifex aeolicus (strain VF5).